The following is a 349-amino-acid chain: Isopentenyl-diphosphate delta-isomerase (349 aa).

5–6 (RK) serves as a coordination point for substrate. Residues Ser62, 63–65 (AIT), Ser93, and Asn122 each bind FMN. 93-95 (SQR) lines the substrate pocket. Position 151 (Gln151) interacts with substrate. Mg(2+) is bound at residue Glu152. FMN contacts are provided by residues Lys183, Thr213, 259 to 261 (GIR), and 280 to 281 (AL).

The protein belongs to the IPP isomerase type 2 family. In terms of assembly, homooctamer. Dimer of tetramers. FMN is required as a cofactor. NADPH serves as cofactor. The cofactor is Mg(2+).

It is found in the cytoplasm. It catalyses the reaction isopentenyl diphosphate = dimethylallyl diphosphate. Involved in the biosynthesis of isoprenoids. Catalyzes the 1,3-allylic rearrangement of the homoallylic substrate isopentenyl (IPP) to its allylic isomer, dimethylallyl diphosphate (DMAPP). This is Isopentenyl-diphosphate delta-isomerase from Methanothermobacter thermautotrophicus (strain ATCC 29096 / DSM 1053 / JCM 10044 / NBRC 100330 / Delta H) (Methanobacterium thermoautotrophicum).